The chain runs to 196 residues: Large ribosomal subunit protein uL5 (196 aa).

The protein belongs to the universal ribosomal protein uL5 family. In terms of assembly, part of the 50S ribosomal subunit; part of the 5S rRNA/L5/L18/L25 subcomplex. Contacts the 5S rRNA and the P site tRNA. Forms a bridge to the 30S subunit in the 70S ribosome.

In terms of biological role, this is one of the proteins that bind and probably mediate the attachment of the 5S RNA into the large ribosomal subunit, where it forms part of the central protuberance. In the 70S ribosome it contacts protein S13 of the 30S subunit (bridge B1b), connecting the 2 subunits; this bridge is implicated in subunit movement. Contacts the P site tRNA; the 5S rRNA and some of its associated proteins might help stabilize positioning of ribosome-bound tRNAs. This chain is Large ribosomal subunit protein uL5, found in Prosthecochloris aestuarii (strain DSM 271 / SK 413).